A 328-amino-acid chain; its full sequence is Tetraacyldisaccharide 4'-kinase (328 aa).

55 to 62 serves as a coordination point for ATP; sequence TAGGNGKT.

This sequence belongs to the LpxK family.

It catalyses the reaction a lipid A disaccharide + ATP = a lipid IVA + ADP + H(+). It participates in glycolipid biosynthesis; lipid IV(A) biosynthesis; lipid IV(A) from (3R)-3-hydroxytetradecanoyl-[acyl-carrier-protein] and UDP-N-acetyl-alpha-D-glucosamine: step 6/6. Its function is as follows. Transfers the gamma-phosphate of ATP to the 4'-position of a tetraacyldisaccharide 1-phosphate intermediate (termed DS-1-P) to form tetraacyldisaccharide 1,4'-bis-phosphate (lipid IVA). In Shigella dysenteriae serotype 1 (strain Sd197), this protein is Tetraacyldisaccharide 4'-kinase.